Reading from the N-terminus, the 217-residue chain is Cytidylate kinase (217 aa).

Gly-9–Ser-17 serves as a coordination point for ATP.

Belongs to the cytidylate kinase family. Type 1 subfamily.

It is found in the cytoplasm. It carries out the reaction CMP + ATP = CDP + ADP. It catalyses the reaction dCMP + ATP = dCDP + ADP. The protein is Cytidylate kinase of Mycoplasma genitalium (strain ATCC 33530 / DSM 19775 / NCTC 10195 / G37) (Mycoplasmoides genitalium).